The chain runs to 44 residues: Cytochrome b559 subunit beta (44 aa).

The chain crosses the membrane as a helical span at residues 19–35 (WLAIHGIAIPTVFFLGA). Histidine 23 contributes to the heme binding site.

This sequence belongs to the PsbE/PsbF family. Heterodimer of an alpha subunit and a beta subunit. PSII is composed of 1 copy each of membrane proteins PsbA, PsbB, PsbC, PsbD, PsbE, PsbF, PsbH, PsbI, PsbJ, PsbK, PsbL, PsbM, PsbT, PsbX, PsbY, PsbZ, Psb30/Ycf12, at least 3 peripheral proteins of the oxygen-evolving complex and a large number of cofactors. It forms dimeric complexes. Heme b serves as cofactor.

It is found in the plastid. The protein resides in the chloroplast thylakoid membrane. In terms of biological role, this b-type cytochrome is tightly associated with the reaction center of photosystem II (PSII). PSII is a light-driven water:plastoquinone oxidoreductase that uses light energy to abstract electrons from H(2)O, generating O(2) and a proton gradient subsequently used for ATP formation. It consists of a core antenna complex that captures photons, and an electron transfer chain that converts photonic excitation into a charge separation. This is Cytochrome b559 subunit beta from Gracilaria tenuistipitata var. liui (Red alga).